Reading from the N-terminus, the 191-residue chain is Pyridoxal 5'-phosphate synthase subunit PdxT (191 aa).

52-54 (GES) is a binding site for L-glutamine. C81 serves as the catalytic Nucleophile. L-glutamine contacts are provided by residues R108 and 136–137 (IR). Residues H172 and E174 each act as charge relay system in the active site.

The protein belongs to the glutaminase PdxT/SNO family. As to quaternary structure, in the presence of PdxS, forms a dodecamer of heterodimers. Only shows activity in the heterodimer.

It carries out the reaction aldehydo-D-ribose 5-phosphate + D-glyceraldehyde 3-phosphate + L-glutamine = pyridoxal 5'-phosphate + L-glutamate + phosphate + 3 H2O + H(+). The enzyme catalyses L-glutamine + H2O = L-glutamate + NH4(+). It functions in the pathway cofactor biosynthesis; pyridoxal 5'-phosphate biosynthesis. Its function is as follows. Catalyzes the hydrolysis of glutamine to glutamate and ammonia as part of the biosynthesis of pyridoxal 5'-phosphate. The resulting ammonia molecule is channeled to the active site of PdxS. The protein is Pyridoxal 5'-phosphate synthase subunit PdxT of Actinobacillus pleuropneumoniae serotype 5b (strain L20).